Here is a 75-residue protein sequence, read N- to C-terminus: MARQLFKRRKFCRFTAEGIKEVDYKAVDLLKDFIAENGKIIPARITGTKARYQRQLSTAIKRARFLALMPYTDQH.

Belongs to the bacterial ribosomal protein bS18 family. In terms of assembly, part of the 30S ribosomal subunit. Forms a tight heterodimer with protein bS6.

Functionally, binds as a heterodimer with protein bS6 to the central domain of the 16S rRNA, where it helps stabilize the platform of the 30S subunit. The polypeptide is Small ribosomal subunit protein bS18 (Laribacter hongkongensis (strain HLHK9)).